The sequence spans 71 residues: uncharacterized protein (71 aa).

The HTH cro/C1-type domain occupies 5 to 59 (IKEFRAKFNMTQEELAKRVGVRRETIVFLEKGKYNPSLKLAYKIARVFNAKIEDI). The H-T-H motif DNA-binding region spans 16–35 (QEELAKRVGVRRETIVFLEK).

This is an uncharacterized protein from Archaeoglobus fulgidus (strain ATCC 49558 / DSM 4304 / JCM 9628 / NBRC 100126 / VC-16).